Consider the following 162-residue polypeptide: Shikimate kinase (162 aa).

Residue 11-16 coordinates ATP; that stretch reads GSGKSS. Position 15 (serine 15) interacts with Mg(2+). 3 residues coordinate substrate: aspartate 33, arginine 57, and glycine 80. The LID domain stretch occupies residues 109–123; sequence NQKEREKRPLLNNLT. Arginine 116 provides a ligand contact to ATP. Arginine 132 provides a ligand contact to substrate.

It belongs to the shikimate kinase family. In terms of assembly, monomer. Mg(2+) serves as cofactor.

It localises to the cytoplasm. The catalysed reaction is shikimate + ATP = 3-phosphoshikimate + ADP + H(+). Its pathway is metabolic intermediate biosynthesis; chorismate biosynthesis; chorismate from D-erythrose 4-phosphate and phosphoenolpyruvate: step 5/7. In terms of biological role, catalyzes the specific phosphorylation of the 3-hydroxyl group of shikimic acid using ATP as a cosubstrate. The sequence is that of Shikimate kinase (aroK) from Helicobacter pylori (strain ATCC 700392 / 26695) (Campylobacter pylori).